We begin with the raw amino-acid sequence, 68 residues long: MNRIACTVHGRVQGVGFRYWTKRKAAALGLRGWVKNAPDGTVMLEAAGEAGLWMSLPGRCTAGLPSAP.

One can recognise an Acylphosphatase-like domain in the interval 3–68 (RIACTVHGRV…RCTAGLPSAP (66 aa)). Catalysis depends on residues Arg18 and Asn36.

It belongs to the acylphosphatase family.

The catalysed reaction is an acyl phosphate + H2O = a carboxylate + phosphate + H(+). The protein is Acylphosphatase (acyP) of Oleidesulfovibrio alaskensis (strain ATCC BAA-1058 / DSM 17464 / G20) (Desulfovibrio alaskensis).